The primary structure comprises 82 residues: Small ribosomal subunit protein bS16 (82 aa).

The protein belongs to the bacterial ribosomal protein bS16 family.

The chain is Small ribosomal subunit protein bS16 from Actinobacillus pleuropneumoniae serotype 5b (strain L20).